A 236-amino-acid polypeptide reads, in one-letter code: Orotidine 5'-phosphate decarboxylase (236 aa).

Substrate-binding positions include aspartate 17, lysine 39, 66–75, threonine 125, arginine 186, glutamine 195, glycine 215, and arginine 216; that span reads DLKFHDIPNT. The Proton donor role is filled by lysine 68.

It belongs to the OMP decarboxylase family. Type 1 subfamily. As to quaternary structure, homodimer.

The enzyme catalyses orotidine 5'-phosphate + H(+) = UMP + CO2. Its pathway is pyrimidine metabolism; UMP biosynthesis via de novo pathway; UMP from orotate: step 2/2. Functionally, catalyzes the decarboxylation of orotidine 5'-monophosphate (OMP) to uridine 5'-monophosphate (UMP). The chain is Orotidine 5'-phosphate decarboxylase from Buchnera aphidicola subsp. Acyrthosiphon pisum (strain APS) (Acyrthosiphon pisum symbiotic bacterium).